The sequence spans 395 residues: MRYFLLFLTLLFLSPSVTASAINCDPNTTTSHQLLFGFGSPIVQSVLFDGCMLDIEKDDYGFVWSCLSNENGDYCKGLYKPRFSQGVSPNWPMCDLSGASAERCIYPYCPEGEECVPLPPSPPSDSPVDGLSSSFKSAFNQVYKNQSEMASTLNHVSGQVSHSQDMVQLNTKFHADRVLESVTAVNNRLGGQMEYLEEIRIDVWDTQREVRKAKDELYSRVAAVSYDVLYSELNVLRAIDELKDSLGGTVVPPNPDQPNPTPPDSSSPNYTGALNTISKKLNTLETISQQLDTMNTALSGRCSNPERCQFPIREAETELETAQQNLKQMINEKITQSALHQFKGSAAVPSFCSYVEAFGYNLCFDFSLFSENLHIIRMIVLAMAYILAAMLILFR.

The interval 247 to 270 is disordered; that stretch reads GGTVVPPNPDQPNPTPPDSSSPNY. The span at 252-265 shows a compositional bias: pro residues; that stretch reads PPNPDQPNPTPPDS.

This is an uncharacterized protein from Vibrio cholerae serotype O1 (strain ATCC 39315 / El Tor Inaba N16961).